The sequence spans 482 residues: Cysteine--tRNA ligase (482 aa).

Residue cysteine 29 participates in Zn(2+) binding. Residues 31–41 (PTVYDFAHIGN) carry the 'HIGH' region motif. Residues cysteine 224, histidine 249, and glutamate 253 each coordinate Zn(2+). The short motif at 282-286 (KMSKS) is the 'KMSKS' region element. Lysine 285 is a binding site for ATP.

This sequence belongs to the class-I aminoacyl-tRNA synthetase family. In terms of assembly, monomer. Zn(2+) is required as a cofactor.

Its subcellular location is the cytoplasm. The enzyme catalyses tRNA(Cys) + L-cysteine + ATP = L-cysteinyl-tRNA(Cys) + AMP + diphosphate. The protein is Cysteine--tRNA ligase of Nitrobacter hamburgensis (strain DSM 10229 / NCIMB 13809 / X14).